The primary structure comprises 491 residues: MKIEEMTIMDIRKGYVQKQFTVKDVVQGYIDRIKELDGKINAFITLCEESALMEAAVLDEKLSRGEEIGLLGGIPVAIKDNMCTQGIKTSCASEMLADFIPPYDATIVKKLRAAGAIIIGKTNMDEFAMGSSTENSAFKVTKNPWDLTKVPGGSSGGSAAALAAGFAPLTIGSDTGGSIRQPAAFCGTVGLKPTYGLVSRFGLIAFASSLDQIGPFTKTVKDCALSLQVMQGNDPLDSTSIQQEPMDDYVKDLDKGVKGLKVGIPKEFFQEGLNIEISDSIKEAIKVLEQLGAVVEEFSLPVTDSGLSAYYIISSAEASSNLARYDGVRYGHRAAVYEGIEEMMLNSRSEGFGKEVKRRIMLGTYVLSSGYYDAYYKKAMDFRKKTRNVFKKAFESYDVILTPTSPVLPFTIGEKTGDPLEMYLADIYTVNVNIAGVPAISIPCGFSKEKLPIGLQLIGDHYSEKKLLQAAYGLEQELGIFKEMPQQREVK.

Active-site charge relay system residues include K79 and S154. Catalysis depends on S178, which acts as the Acyl-ester intermediate.

It belongs to the amidase family. GatA subfamily. In terms of assembly, heterotrimer of A, B and C subunits.

It carries out the reaction L-glutamyl-tRNA(Gln) + L-glutamine + ATP + H2O = L-glutaminyl-tRNA(Gln) + L-glutamate + ADP + phosphate + H(+). Its function is as follows. Allows the formation of correctly charged Gln-tRNA(Gln) through the transamidation of misacylated Glu-tRNA(Gln) in organisms which lack glutaminyl-tRNA synthetase. The reaction takes place in the presence of glutamine and ATP through an activated gamma-phospho-Glu-tRNA(Gln). This chain is Glutamyl-tRNA(Gln) amidotransferase subunit A, found in Alkaliphilus metalliredigens (strain QYMF).